A 283-amino-acid polypeptide reads, in one-letter code: Bifunctional protein FolD (283 aa).

Residues 166-168, Ser191, and Thr232 contribute to the NADP(+) site; that span reads GRS.

Belongs to the tetrahydrofolate dehydrogenase/cyclohydrolase family. As to quaternary structure, homodimer.

It catalyses the reaction (6R)-5,10-methylene-5,6,7,8-tetrahydrofolate + NADP(+) = (6R)-5,10-methenyltetrahydrofolate + NADPH. It carries out the reaction (6R)-5,10-methenyltetrahydrofolate + H2O = (6R)-10-formyltetrahydrofolate + H(+). It participates in one-carbon metabolism; tetrahydrofolate interconversion. In terms of biological role, catalyzes the oxidation of 5,10-methylenetetrahydrofolate to 5,10-methenyltetrahydrofolate and then the hydrolysis of 5,10-methenyltetrahydrofolate to 10-formyltetrahydrofolate. The protein is Bifunctional protein FolD of Halothermothrix orenii (strain H 168 / OCM 544 / DSM 9562).